Consider the following 130-residue polypeptide: UPF0102 protein AHA_3896 (130 aa).

The protein belongs to the UPF0102 family.

In Aeromonas hydrophila subsp. hydrophila (strain ATCC 7966 / DSM 30187 / BCRC 13018 / CCUG 14551 / JCM 1027 / KCTC 2358 / NCIMB 9240 / NCTC 8049), this protein is UPF0102 protein AHA_3896.